The primary structure comprises 277 residues: Small ribosomal subunit protein uS3 (277 aa).

The region spanning 43–111 (IRQLMSTGME…QVQLNILEVK (69 aa)) is the KH type-2 domain. Residues 218 to 228 (QQAAAAPSRGR) show a composition bias toward low complexity. The disordered stretch occupies residues 218-277 (QQAAAAPSRGRGASDRPGRPGGADRGDRRRRTDRPAAEAAPAAEAPAVEAAAPAVEGGQA). The segment covering 229 to 244 (GASDRPGRPGGADRGD) has biased composition (basic and acidic residues). Positions 254-277 (AEAAPAAEAPAVEAAAPAVEGGQA) are enriched in low complexity.

It belongs to the universal ribosomal protein uS3 family. Part of the 30S ribosomal subunit. Forms a tight complex with proteins S10 and S14.

Functionally, binds the lower part of the 30S subunit head. Binds mRNA in the 70S ribosome, positioning it for translation. The sequence is that of Small ribosomal subunit protein uS3 from Arthrobacter sp. (strain FB24).